A 206-amino-acid polypeptide reads, in one-letter code: Outer-membrane lipoprotein carrier protein (206 aa).

A signal peptide spans 1 to 20 (MFYLIKKLPKFILFSLYLYA).

The protein belongs to the LolA family. In terms of assembly, monomer.

Its subcellular location is the periplasm. Its function is as follows. Participates in the translocation of lipoproteins from the inner membrane to the outer membrane. Only forms a complex with a lipoprotein if the residue after the N-terminal Cys is not an aspartate (The Asp acts as a targeting signal to indicate that the lipoprotein should stay in the inner membrane). This chain is Outer-membrane lipoprotein carrier protein, found in Wigglesworthia glossinidia brevipalpis.